Here is a 528-residue protein sequence, read N- to C-terminus: GMP synthase [glutamine-hydrolyzing] (528 aa).

A Glutamine amidotransferase type-1 domain is found at 13–204; it reads SIVILDFGSQ…VHNICRSKPD (192 aa). The Nucleophile role is filled by C90. Catalysis depends on residues H178 and E180. In terms of domain architecture, GMPS ATP-PPase spans 205-403; it reads WTTNTFIDEA…LGLPEEIVNR (199 aa). Residue 232–238 coordinates ATP; the sequence is SGGVDSS.

In terms of assembly, homodimer.

The enzyme catalyses XMP + L-glutamine + ATP + H2O = GMP + L-glutamate + AMP + diphosphate + 2 H(+). Its pathway is purine metabolism; GMP biosynthesis; GMP from XMP (L-Gln route): step 1/1. In terms of biological role, catalyzes the synthesis of GMP from XMP. This Prochlorococcus marinus (strain SARG / CCMP1375 / SS120) protein is GMP synthase [glutamine-hydrolyzing].